A 239-amino-acid chain; its full sequence is Ribosomal RNA large subunit methyltransferase E (239 aa).

The S-adenosyl-L-methionine site is built by Gly88, Trp90, Asp111, Asp127, and Asp151. Lys191 (proton acceptor) is an active-site residue.

This sequence belongs to the class I-like SAM-binding methyltransferase superfamily. RNA methyltransferase RlmE family.

It localises to the cytoplasm. The enzyme catalyses uridine(2552) in 23S rRNA + S-adenosyl-L-methionine = 2'-O-methyluridine(2552) in 23S rRNA + S-adenosyl-L-homocysteine + H(+). Its function is as follows. Specifically methylates the uridine in position 2552 of 23S rRNA at the 2'-O position of the ribose in the fully assembled 50S ribosomal subunit. This chain is Ribosomal RNA large subunit methyltransferase E, found in Bartonella bacilliformis (strain ATCC 35685 / KC583 / Herrer 020/F12,63).